The sequence spans 428 residues: Dihydrolipoyllysine-residue acetyltransferase component of pyruvate dehydrogenase complex (428 aa).

Positions 2 to 77 (AFEFKLPDIG…TVGQTLITLD (76 aa)) constitute a Lipoyl-binding domain. Lys43 is subject to N6-lipoyllysine. The interval 88–123 (GQEQEEAKKEEKTETVSKEEKVDAVAPNAPAAEAEA) is disordered. Residues 89-110 (QEQEEAKKEEKTETVSKEEKVD) show a composition bias toward basic and acidic residues. Over residues 111–123 (AVAPNAPAAEAEA) the composition is skewed to low complexity. The Peripheral subunit-binding (PSBD) domain maps to 130–167 (IAMPSVRKYAREKGVDIRLVQGTGKNGRVLKEDIDAFL). Positions 177–194 (AAEEKAAPAAAKPATTEG) are enriched in low complexity. Positions 177–201 (AAEEKAAPAAAKPATTEGEFPETRE) are disordered. The active site involves His399.

This sequence belongs to the 2-oxoacid dehydrogenase family. As to quaternary structure, forms a 60-polypeptide structural core with icosahedral symmetry. (R)-lipoate is required as a cofactor.

It carries out the reaction N(6)-[(R)-dihydrolipoyl]-L-lysyl-[protein] + acetyl-CoA = N(6)-[(R)-S(8)-acetyldihydrolipoyl]-L-lysyl-[protein] + CoA. Its function is as follows. The pyruvate dehydrogenase complex catalyzes the overall conversion of pyruvate to acetyl-CoA and CO(2). It contains multiple copies of three enzymatic components: pyruvate dehydrogenase (E1), dihydrolipoamide acetyltransferase (E2) and lipoamide dehydrogenase (E3). In Geobacillus stearothermophilus (Bacillus stearothermophilus), this protein is Dihydrolipoyllysine-residue acetyltransferase component of pyruvate dehydrogenase complex (pdhC).